Consider the following 401-residue polypeptide: S-adenosylmethionine synthase (401 aa).

135-140 is a binding site for ATP; the sequence is GHGSGD.

This sequence belongs to the AdoMet synthase 2 family. Requires Mg(2+) as cofactor.

It catalyses the reaction L-methionine + ATP + H2O = S-adenosyl-L-methionine + phosphate + diphosphate. Its pathway is amino-acid biosynthesis; S-adenosyl-L-methionine biosynthesis; S-adenosyl-L-methionine from L-methionine: step 1/1. Its function is as follows. Catalyzes the formation of S-adenosylmethionine from methionine and ATP. The protein is S-adenosylmethionine synthase (mat) of Methanothermobacter marburgensis (strain ATCC BAA-927 / DSM 2133 / JCM 14651 / NBRC 100331 / OCM 82 / Marburg) (Methanobacterium thermoautotrophicum).